A 482-amino-acid chain; its full sequence is tRNA sulfurtransferase (482 aa).

The THUMP domain maps to 61–165 (LAIRDALTRI…DDRLLLIKGR (105 aa)). Residues 183–184 (LI), lysine 265, glycine 287, and glutamine 296 each bind ATP. A disulfide bridge links cysteine 344 with cysteine 456. Residues 404–482 (FGPNDVILDI…GFANVKVYRP (79 aa)) form the Rhodanese domain. Cysteine 456 acts as the Cysteine persulfide intermediate in catalysis.

The protein belongs to the ThiI family.

It localises to the cytoplasm. It catalyses the reaction [ThiI sulfur-carrier protein]-S-sulfanyl-L-cysteine + a uridine in tRNA + 2 reduced [2Fe-2S]-[ferredoxin] + ATP + H(+) = [ThiI sulfur-carrier protein]-L-cysteine + a 4-thiouridine in tRNA + 2 oxidized [2Fe-2S]-[ferredoxin] + AMP + diphosphate. The catalysed reaction is [ThiS sulfur-carrier protein]-C-terminal Gly-Gly-AMP + S-sulfanyl-L-cysteinyl-[cysteine desulfurase] + AH2 = [ThiS sulfur-carrier protein]-C-terminal-Gly-aminoethanethioate + L-cysteinyl-[cysteine desulfurase] + A + AMP + 2 H(+). Its pathway is cofactor biosynthesis; thiamine diphosphate biosynthesis. Catalyzes the ATP-dependent transfer of a sulfur to tRNA to produce 4-thiouridine in position 8 of tRNAs, which functions as a near-UV photosensor. Also catalyzes the transfer of sulfur to the sulfur carrier protein ThiS, forming ThiS-thiocarboxylate. This is a step in the synthesis of thiazole, in the thiamine biosynthesis pathway. The sulfur is donated as persulfide by IscS. This chain is tRNA sulfurtransferase, found in Salmonella heidelberg (strain SL476).